The chain runs to 447 residues: Trigger factor (447 aa).

The PPIase FKBP-type domain occupies 188–273; it reads GDKLVIDFEG…VNDIQVAEDF (86 aa).

Belongs to the FKBP-type PPIase family. Tig subfamily.

It localises to the cytoplasm. It catalyses the reaction [protein]-peptidylproline (omega=180) = [protein]-peptidylproline (omega=0). Its function is as follows. Involved in protein export. Acts as a chaperone by maintaining the newly synthesized protein in an open conformation. Functions as a peptidyl-prolyl cis-trans isomerase. The chain is Trigger factor from Wolbachia sp. subsp. Brugia malayi (strain TRS).